A 208-amino-acid polypeptide reads, in one-letter code: Uracil phosphoribosyltransferase (208 aa).

5-phospho-alpha-D-ribose 1-diphosphate-binding positions include Arg78, Arg103, and Asp130 to Thr138. Uracil is bound by residues Ile193 and Gly198–Ala200. Asp199 contributes to the 5-phospho-alpha-D-ribose 1-diphosphate binding site.

Belongs to the UPRTase family. Requires Mg(2+) as cofactor.

It carries out the reaction UMP + diphosphate = 5-phospho-alpha-D-ribose 1-diphosphate + uracil. It functions in the pathway pyrimidine metabolism; UMP biosynthesis via salvage pathway; UMP from uracil: step 1/1. With respect to regulation, allosterically activated by GTP. Functionally, catalyzes the conversion of uracil and 5-phospho-alpha-D-ribose 1-diphosphate (PRPP) to UMP and diphosphate. This chain is Uracil phosphoribosyltransferase, found in Oleidesulfovibrio alaskensis (strain ATCC BAA-1058 / DSM 17464 / G20) (Desulfovibrio alaskensis).